A 285-amino-acid polypeptide reads, in one-letter code: Catechol-2,3-dioxygenase (285 aa).

2 consecutive VOC domains span residues 9–126 and 169–285; these read HIGY…MYAD and IIGH…TFVI. 2 residues coordinate Fe cation: H213 and E264.

The protein belongs to the extradiol ring-cleavage dioxygenase family. Fe(2+) serves as cofactor.

It carries out the reaction catechol + O2 = (2Z,4E)-2-hydroxy-6-oxohexa-2,4-dienoate + H(+). In terms of biological role, involved in the meta cleavage of catechol to 2-hydroxymuconic semialdehyde. Essential for growth and viability in the presence of catechol and probably involved in the detoxification of catechol. This is Catechol-2,3-dioxygenase (catE) from Bacillus subtilis (strain 168).